The chain runs to 169 residues: S-ribosylhomocysteine lyase (169 aa).

Residues His54, His58, and Cys129 each contribute to the Fe cation site.

This sequence belongs to the LuxS family. Homodimer. Requires Fe cation as cofactor.

The catalysed reaction is S-(5-deoxy-D-ribos-5-yl)-L-homocysteine = (S)-4,5-dihydroxypentane-2,3-dione + L-homocysteine. Involved in the synthesis of autoinducer 2 (AI-2) which is secreted by bacteria and is used to communicate both the cell density and the metabolic potential of the environment. The regulation of gene expression in response to changes in cell density is called quorum sensing. Catalyzes the transformation of S-ribosylhomocysteine (RHC) to homocysteine (HC) and 4,5-dihydroxy-2,3-pentadione (DPD). The chain is S-ribosylhomocysteine lyase from Haemophilus ducreyi (strain 35000HP / ATCC 700724).